The chain runs to 305 residues: Protein-methionine-sulfoxide reductase catalytic subunit MsrP (305 aa).

The segment at residues 1–54 (MLIRKPADHLPSEITSESVYFNRRQFMAGAAGLLLSAETLAGLAAKKSPLSQLA) is a signal peptide (tat-type signal). Mo-molybdopterin-binding positions include Asn-69, 72 to 73 (YE), Cys-126, Thr-161, Asn-209, Arg-214, and 225 to 227 (SIK).

Belongs to the MsrP family. As to quaternary structure, heterodimer of a catalytic subunit (MsrP) and a heme-binding subunit (MsrQ). It depends on Mo-molybdopterin as a cofactor. Post-translationally, predicted to be exported by the Tat system. The position of the signal peptide cleavage has not been experimentally proven.

Its subcellular location is the periplasm. The enzyme catalyses L-methionyl-[protein] + a quinone + H2O = L-methionyl-(S)-S-oxide-[protein] + a quinol. The catalysed reaction is L-methionyl-[protein] + a quinone + H2O = L-methionyl-(R)-S-oxide-[protein] + a quinol. Its function is as follows. Part of the MsrPQ system that repairs oxidized periplasmic proteins containing methionine sulfoxide residues (Met-O), using respiratory chain electrons. Thus protects these proteins from oxidative-stress damage caused by reactive species of oxygen and chlorine generated by the host defense mechanisms. MsrPQ is essential for the maintenance of envelope integrity under bleach stress, rescuing a wide series of structurally unrelated periplasmic proteins from methionine oxidation. The catalytic subunit MsrP is non-stereospecific, being able to reduce both (R-) and (S-) diastereoisomers of methionine sulfoxide. This Chromobacterium violaceum (strain ATCC 12472 / DSM 30191 / JCM 1249 / CCUG 213 / NBRC 12614 / NCIMB 9131 / NCTC 9757 / MK) protein is Protein-methionine-sulfoxide reductase catalytic subunit MsrP.